The primary structure comprises 608 residues: MSCKKCCSSSQTKWILAGSVSMTLVLAISMILGLTLYQRTRPGCENDAVCRPDADMLDYLQNIGQISHRDGLLVTWYHAANSKKEMEAALNSDVMVLEADVTVEGFNTANETEVPIMAHPPAIYSDNTLKEWLEAVLASSQKGIKLDFKSLKAVGPSLDLLRQLTEAGRIRRPVWINADILKGPNVPISTEVNATQFLALVQEKYPKATISPGFTTLYVHQLPNSTYTQAMVETMEELVRALPQKVTFPMRAVMTRAAWPHFSWLLSQSERYSLTLWQGASDPVSVEDLLFIRDNSAPHQIYYDLFEPVLSQFKQLALNTTRKRTFYTGGSLIPVLQQPKGDGLEVEWLALEVNDKGRKAAITVPDREGMILLDVGLQEPEVGNPVPVLRTPGGSVLTLESCLLHLAVHATRWSIHVNITEPAALRPSLATLAHLSTLGHLPWPVWVGATVSYGSFVVPGHIAGRELLTAVAEVFPHVTVAPAWPEEMLGSGYQEQMVTEMLELCQGLRQPVSFQLQAGPLGQSPANTVARLLAFSPRATVTVYHSSAGNSYADVWAGLWAARAVDRTRVYYRIPQEYRKDLLAHVDRHRPSSRTGPSYVEGFPGESR.

Residues 14-34 (WILAGSVSMTLVLAISMILGL) traverse the membrane as a helical segment. The interval 588 to 608 (RHRPSSRTGPSYVEGFPGESR) is disordered.

It belongs to the menorin family.

The protein resides in the membrane. In Rattus norvegicus (Rat), this protein is Protein FAM151A (Fam151a).